The chain runs to 173 residues: Crossover junction endodeoxyribonuclease RuvC (173 aa).

Active-site residues include Asp8, Glu67, and Asp139. Residues Asp8, Glu67, and Asp139 each contribute to the Mg(2+) site.

It belongs to the RuvC family. In terms of assembly, homodimer which binds Holliday junction (HJ) DNA. The HJ becomes 2-fold symmetrical on binding to RuvC with unstacked arms; it has a different conformation from HJ DNA in complex with RuvA. In the full resolvosome a probable DNA-RuvA(4)-RuvB(12)-RuvC(2) complex forms which resolves the HJ. The cofactor is Mg(2+).

Its subcellular location is the cytoplasm. It catalyses the reaction Endonucleolytic cleavage at a junction such as a reciprocal single-stranded crossover between two homologous DNA duplexes (Holliday junction).. Its function is as follows. The RuvA-RuvB-RuvC complex processes Holliday junction (HJ) DNA during genetic recombination and DNA repair. Endonuclease that resolves HJ intermediates. Cleaves cruciform DNA by making single-stranded nicks across the HJ at symmetrical positions within the homologous arms, yielding a 5'-phosphate and a 3'-hydroxyl group; requires a central core of homology in the junction. The consensus cleavage sequence is 5'-(A/T)TT(C/G)-3'. Cleavage occurs on the 3'-side of the TT dinucleotide at the point of strand exchange. HJ branch migration catalyzed by RuvA-RuvB allows RuvC to scan DNA until it finds its consensus sequence, where it cleaves and resolves the cruciform DNA. The polypeptide is Crossover junction endodeoxyribonuclease RuvC (Erwinia tasmaniensis (strain DSM 17950 / CFBP 7177 / CIP 109463 / NCPPB 4357 / Et1/99)).